A 1153-amino-acid chain; its full sequence is Protein unc-13 homolog 4B (1153 aa).

Residues 54–84 (VLKSSLAPLEENGSGGEEDSDESPDGTLQLS) form a disordered region. In terms of domain architecture, C2 1 spans 162 to 288 (ATHEEIYEAA…MKEIAVTASS (127 aa)). Ca(2+)-binding residues include Asp195, Asp201, Asp252, Phe253, and Asp254. Positions 637-755 (FEVYLILKRY…RCCIFYAQQM (119 aa)) constitute an MHD1 domain. The 107-residue stretch at 869 to 975 (SNSMDQLMMY…LETSDLIHQY (107 aa)) folds into the MHD2 domain. The 125-residue stretch at 990–1114 (PYGQLTITAQ…EATPPGEQIM (125 aa)) folds into the C2 2 domain. Ca(2+) is bound by residues Asp1019, Asp1025, Asp1083, and Asp1085.

This sequence belongs to the unc-13 family. As to quaternary structure, interacts with Cam. It depends on Ca(2+) as a cofactor.

Its subcellular location is the cytoplasm. It is found in the cytoskeleton. It localises to the cell projection. The protein localises to the filopodium. The protein resides in the late endosome. Its subcellular location is the lysosome. Its function is as follows. Essential for tracheal development in embryos. Functions with the GTPase Rab39 and downstream of dnd, to regulate lumen fusion between previously separate tracheal branches (anastomosis). Essential component of secretory lysosome-related organelles (SLs) that are present in the tracheal fusion tip cells (FCs). Mediates intracellular fusion of the extending tracheal stalk cell lumen in the FCs by recruiting the SNARE complex component Syx1A to the SLs, this may then enable the SLs to interact with complementary SNAREs (such as Syb) present in the apical membrane of the FC-FC interface and the membranes of the separate tracheal stalk cells. May also function in the maturation and exocytosis of the SLs. This Drosophila melanogaster (Fruit fly) protein is Protein unc-13 homolog 4B.